The chain runs to 232 residues: Large ribosomal subunit protein uL1 (232 aa).

It belongs to the universal ribosomal protein uL1 family. In terms of assembly, part of the 50S ribosomal subunit.

Binds directly to 23S rRNA. The L1 stalk is quite mobile in the ribosome, and is involved in E site tRNA release. Functionally, protein L1 is also a translational repressor protein, it controls the translation of the L11 operon by binding to its mRNA. The polypeptide is Large ribosomal subunit protein uL1 (Chlamydia trachomatis serovar D (strain ATCC VR-885 / DSM 19411 / UW-3/Cx)).